Here is a 442-residue protein sequence, read N- to C-terminus: Tubulin beta chain (442 aa).

GTP is bound by residues glutamine 11, glutamate 69, serine 138, glycine 142, threonine 143, glycine 144, asparagine 204, and asparagine 226. A Mg(2+)-binding site is contributed by glutamate 69.

The protein belongs to the tubulin family. In terms of assembly, dimer of alpha and beta chains. A typical microtubule is a hollow water-filled tube with an outer diameter of 25 nm and an inner diameter of 15 nM. Alpha-beta heterodimers associate head-to-tail to form protofilaments running lengthwise along the microtubule wall with the beta-tubulin subunit facing the microtubule plus end conferring a structural polarity. Microtubules usually have 13 protofilaments but different protofilament numbers can be found in some organisms and specialized cells. It depends on Mg(2+) as a cofactor.

The protein localises to the cytoplasm. It localises to the cytoskeleton. Its function is as follows. Tubulin is the major constituent of microtubules, a cylinder consisting of laterally associated linear protofilaments composed of alpha- and beta-tubulin heterodimers. Microtubules grow by the addition of GTP-tubulin dimers to the microtubule end, where a stabilizing cap forms. Below the cap, tubulin dimers are in GDP-bound state, owing to GTPase activity of alpha-tubulin. The chain is Tubulin beta chain (bPT2) from Paramecium tetraurelia.